A 99-amino-acid chain; its full sequence is Citrate lyase acyl carrier protein (99 aa).

O-(phosphoribosyl dephospho-coenzyme A)serine is present on Ser-14.

The protein belongs to the CitD family. As to quaternary structure, oligomer with a subunit composition of (alpha,beta,gamma)6.

It localises to the cytoplasm. Functionally, covalent carrier of the coenzyme of citrate lyase. The sequence is that of Citrate lyase acyl carrier protein from Edwardsiella ictaluri (strain 93-146).